We begin with the raw amino-acid sequence, 356 residues long: Phosphate acyltransferase (356 aa).

It belongs to the PlsX family. Homodimer. Probably interacts with PlsY.

It is found in the cytoplasm. The enzyme catalyses a fatty acyl-[ACP] + phosphate = an acyl phosphate + holo-[ACP]. It functions in the pathway lipid metabolism; phospholipid metabolism. Catalyzes the reversible formation of acyl-phosphate (acyl-PO(4)) from acyl-[acyl-carrier-protein] (acyl-ACP). This enzyme utilizes acyl-ACP as fatty acyl donor, but not acyl-CoA. This is Phosphate acyltransferase from Mesorhizobium japonicum (strain LMG 29417 / CECT 9101 / MAFF 303099) (Mesorhizobium loti (strain MAFF 303099)).